We begin with the raw amino-acid sequence, 159 residues long: Cytochrome c-type biogenesis protein CcmE (159 aa).

Over 1 to 23 (MNNSSLENSASLKVILKQRKKKR) the chain is Cytoplasmic. Residues 24–44 (LLIILLCCLVMAIAASLVVYA) form a helical; Signal-anchor for type II membrane protein membrane-spanning segment. The Periplasmic segment spans residues 45-159 (MRHAVSFFRM…RLKKHYSVEK (115 aa)). Heme contacts are provided by histidine 138 and tyrosine 142.

It belongs to the CcmE/CycJ family.

It localises to the cell inner membrane. In terms of biological role, heme chaperone required for the biogenesis of c-type cytochromes. Transiently binds heme delivered by CcmC and transfers the heme to apo-cytochromes in a process facilitated by CcmF and CcmH. In Bartonella tribocorum (strain CIP 105476 / IBS 506), this protein is Cytochrome c-type biogenesis protein CcmE.